Consider the following 412-residue polypeptide: Putative competence-damage inducible protein (412 aa).

It belongs to the CinA family.

In Bacillus cereus (strain Q1), this protein is Putative competence-damage inducible protein.